The primary structure comprises 493 residues: Glutamate--tRNA ligase (493 aa).

A 'HIGH' region motif is present at residues 10-20 (PSPTGTPHVGL). The 'KMSKS' region signature appears at 254–258 (KLSKR). An ATP-binding site is contributed by lysine 257.

The protein belongs to the class-I aminoacyl-tRNA synthetase family. Glutamate--tRNA ligase type 1 subfamily. In terms of assembly, monomer.

The protein localises to the cytoplasm. It carries out the reaction tRNA(Glu) + L-glutamate + ATP = L-glutamyl-tRNA(Glu) + AMP + diphosphate. Its function is as follows. Catalyzes the attachment of glutamate to tRNA(Glu) in a two-step reaction: glutamate is first activated by ATP to form Glu-AMP and then transferred to the acceptor end of tRNA(Glu). The polypeptide is Glutamate--tRNA ligase (Corynebacterium glutamicum (strain ATCC 13032 / DSM 20300 / JCM 1318 / BCRC 11384 / CCUG 27702 / LMG 3730 / NBRC 12168 / NCIMB 10025 / NRRL B-2784 / 534)).